Consider the following 117-residue polypeptide: Immunoglobulin heavy variable 1-69D (117 aa).

The N-terminal stretch at 1 to 19 is a signal peptide; sequence MDWTWRFLFVVAAATGVQS. A Pyrrolidone carboxylic acid modification is found at Q20. Residues 20-44 are framework-1; it reads QVQLVQSGAEVKKPGSSVKVSCKAS. The Ig-like domain occupies 20 to 117; sequence QVQLVQSGAE…EDTAVYYCAR (98 aa). C41 and C115 are disulfide-bonded. Residues 45-52 are complementarity-determining-1; it reads GGTFSSYA. The framework-2 stretch occupies residues 53–69; the sequence is ISWVRQAPGQGLEWMGG. The complementarity-determining-2 stretch occupies residues 70–77; the sequence is IIPIFGTA. The interval 78–115 is framework-3; that stretch reads NYAQKFQGRVTITADESTSTAYMELSSLRSEDTAVYYC. A complementarity-determining-3 region spans residues 116 to 117; the sequence is AR.

In terms of assembly, immunoglobulins are composed of two identical heavy chains and two identical light chains; disulfide-linked.

It localises to the secreted. The protein resides in the cell membrane. V region of the variable domain of immunoglobulin heavy chains that participates in the antigen recognition. Immunoglobulins, also known as antibodies, are membrane-bound or secreted glycoproteins produced by B lymphocytes. In the recognition phase of humoral immunity, the membrane-bound immunoglobulins serve as receptors which, upon binding of a specific antigen, trigger the clonal expansion and differentiation of B lymphocytes into immunoglobulins-secreting plasma cells. Secreted immunoglobulins mediate the effector phase of humoral immunity, which results in the elimination of bound antigens. The antigen binding site is formed by the variable domain of one heavy chain, together with that of its associated light chain. Thus, each immunoglobulin has two antigen binding sites with remarkable affinity for a particular antigen. The variable domains are assembled by a process called V-(D)-J rearrangement and can then be subjected to somatic hypermutations which, after exposure to antigen and selection, allow affinity maturation for a particular antigen. The chain is Immunoglobulin heavy variable 1-69D from Homo sapiens (Human).